Consider the following 475-residue polypeptide: FAD-dependent monooxygenase sdgC (475 aa).

The signal sequence occupies residues 1 to 23 (MDKRSFKVIVVGGSIAGLTLAHS). FAD-binding residues include E35, G49, and R126. The N-linked (GlcNAc...) asparagine glycan is linked to N236. A330 provides a ligand contact to FAD. Residues 446–466 (ISGVLLLVIPIIALVYGYSVI) traverse the membrane as a helical segment.

It belongs to the paxM FAD-dependent monooxygenase family. It depends on FAD as a cofactor.

The protein localises to the membrane. The protein operates within secondary metabolite biosynthesis. Functionally, FAD-dependent monooxygenase; part of the gene cluster that mediates the biosynthesis of the polyenes aspernidgulenes. The carbon backbone of aspernidgulenes is synthesized by the HR-PKS sdgA, which accepts acetyl-CoA as the starter unit and performs malonyl-CoA extensions as well as regioselective methylation and reduction. The resulting nonaketide offloads the HR-PKS by intramolecular lactonization to yield the 5,6-dihydro-alpha-pyrone-containing hexaenoic acids preaspernidgulene A1 and A2. The FAD-dependent monooxygenase sdgC then installs the first epoxide on the penultimate double bond. Subsequently, the FAD-dependent monooxygenase sdgF presumably generates a ketone intermediate through Meinwald rearrangement involving a hydride shift. Next, sdgC introduces another epoxide on the last olefin of the ketone intermediate after E/Z isomerization. The epoxide hydrolase sdgD then catalyzes stereospecific cyclization of the 5,6-dihydro-alpha-pyrone and opening of the epoxide ring to form an oxygenated trimethylcyclopentanone and an oxabicyclo[2.2.1]heptane unit. Finally, the bicyclic unit undergoes hydrolytic cleavage, either spontaneously or catalyzed by sdgD, to assemble the dimethyl-gamma-lactone moiety in aspernidgulene A1. This is FAD-dependent monooxygenase sdgC from Emericella nidulans (strain FGSC A4 / ATCC 38163 / CBS 112.46 / NRRL 194 / M139) (Aspergillus nidulans).